A 148-amino-acid chain; its full sequence is NADH-quinone oxidoreductase subunit C (148 aa).

Belongs to the complex I 30 kDa subunit family. As to quaternary structure, NDH-1 is composed of 14 different subunits. Subunits NuoB, C, D, E, F, and G constitute the peripheral sector of the complex.

The protein resides in the cell membrane. The enzyme catalyses a quinone + NADH + 5 H(+)(in) = a quinol + NAD(+) + 4 H(+)(out). Its function is as follows. NDH-1 shuttles electrons from NADH, via FMN and iron-sulfur (Fe-S) centers, to quinones in the respiratory chain. The immediate electron acceptor for the enzyme in this species is believed to be a menaquinone. Couples the redox reaction to proton translocation (for every two electrons transferred, four hydrogen ions are translocated across the cytoplasmic membrane), and thus conserves the redox energy in a proton gradient. The sequence is that of NADH-quinone oxidoreductase subunit C from Moorella thermoacetica (strain ATCC 39073 / JCM 9320).